The following is a 370-amino-acid chain: Prolactin-releasing peptide receptor (370 aa).

The interval 1 to 34 (MTSLPPGTTGDPDLFSGPSPAGSTPANQSAEASE) is disordered. The Extracellular portion of the chain corresponds to 1–62 (MTSLPPGTTG…LQLVHQLKGL (62 aa)). The span at 21 to 34 (AGSTPANQSAEASE) shows a compositional bias: polar residues. N-linked (GlcNAc...) asparagine glycosylation is found at Asn27 and Asn36. The helical transmembrane segment at 63 to 83 (IVMLYSIVVVVGLVGNCLLVL) threads the bilayer. Residues 84–101 (VIARVRRLHNVTNFLIGN) are Cytoplasmic-facing. Residues 102–122 (LALSDVLMCAACVPLTLAYAF) traverse the membrane as a helical segment. Residues 123–126 (EPRG) lie on the Extracellular side of the membrane. The chain crosses the membrane as a helical span at residues 127–147 (WVFGGGLCHLVFFLQPVTVYV). Cys134 and Cys211 are oxidised to a cystine. Over 148 to 175 (SVFTLTTIAVDRYVVLVHPLRRRISLKL) the chain is Cytoplasmic. A helical membrane pass occupies residues 176–196 (SAYAVLGIWALSAVLALPAAV). Topologically, residues 197-223 (HTYHVELKPHDVRLCEEFWGSQERQRQ) are extracellular. A helical transmembrane segment spans residues 224–244 (IYAWGLLLGTYLLPLLAILLS). At 245–276 (YVRVSVKLRNRVVPGSVTQSQADWDRARRRRT) the chain is on the cytoplasmic side. Residues 277–297 (FCLLVVVVVVFALCWLPLHIF) form a helical membrane-spanning segment. The Extracellular portion of the chain corresponds to 298 to 317 (NLLRDLDPRAIDPYAFGLVQ). A helical membrane pass occupies residues 318 to 338 (LLCHWLAMSSACYNPFIYAWL). The Cytoplasmic portion of the chain corresponds to 339 to 370 (HDSFREELRKMLLSWPRKIVPHGQNMTVSVVI). The required for interaction with GRIP1, GRIP2 and PICK1 stretch occupies residues 365–370 (TVSVVI).

Belongs to the G-protein coupled receptor 1 family. As to quaternary structure, interacts through its C-terminal region with the PDZ domain-containing proteins GRIP1, GRIP2 and PICK1. Interacts with PDZ domains 4 and 5 of GRIP1 and with the PDZ domain of PICK1. As to expression, widely expressed, with highest levels in pituitary, cerebellum, and hypothalamus.

The protein localises to the cell membrane. Functionally, receptor for prolactin-releasing peptide (PrRP). Implicated in lactation, regulation of food intake and pain-signal processing. The sequence is that of Prolactin-releasing peptide receptor (Prlhr) from Rattus norvegicus (Rat).